The following is a 130-amino-acid chain: uncharacterized protein (130 aa).

The disordered stretch occupies residues 1 to 28 (MELAKERNGPHQKHHGQCQNHCTSPNTV). Residues 17–28 (QCQNHCTSPNTV) are compositionally biased toward polar residues.

This is an uncharacterized protein from Saccharomyces cerevisiae (strain ATCC 204508 / S288c) (Baker's yeast).